The sequence spans 666 residues: UvrABC system protein B (666 aa).

The 388-residue stretch at 25-412 (EQVQAGAPYQ…EEQIVEQVIR (388 aa)) folds into the Helicase ATP-binding domain. Residue 38–45 (GATGTGKT) coordinates ATP. Residues 91 to 114 (YYDYYQPEAYIPVTDTYIAKTASI) carry the Beta-hairpin motif. The 167-residue stretch at 429–595 (QVDDLLAEIQ…PIIKRSSNAI (167 aa)) folds into the Helicase C-terminal domain. Residues 626–661 (PNLITQLEAQMKEAAKNLEFEEAAQYRDRIKKLRER) form the UVR domain.

It belongs to the UvrB family. As to quaternary structure, forms a heterotetramer with UvrA during the search for lesions. Interacts with UvrC in an incision complex.

It is found in the cytoplasm. The UvrABC repair system catalyzes the recognition and processing of DNA lesions. A damage recognition complex composed of 2 UvrA and 2 UvrB subunits scans DNA for abnormalities. Upon binding of the UvrA(2)B(2) complex to a putative damaged site, the DNA wraps around one UvrB monomer. DNA wrap is dependent on ATP binding by UvrB and probably causes local melting of the DNA helix, facilitating insertion of UvrB beta-hairpin between the DNA strands. Then UvrB probes one DNA strand for the presence of a lesion. If a lesion is found the UvrA subunits dissociate and the UvrB-DNA preincision complex is formed. This complex is subsequently bound by UvrC and the second UvrB is released. If no lesion is found, the DNA wraps around the other UvrB subunit that will check the other stand for damage. This Synechococcus sp. (strain ATCC 27144 / PCC 6301 / SAUG 1402/1) (Anacystis nidulans) protein is UvrABC system protein B.